The chain runs to 256 residues: 5-keto-4-deoxy-D-glucarate aldolase (256 aa).

His-50 functions as the Proton acceptor in the catalytic mechanism. Position 151 (Gln-151) interacts with substrate. Residue Glu-153 participates in Mg(2+) binding. Residues Ser-178 and Asp-179 each contribute to the substrate site. Asp-179 is a binding site for Mg(2+).

This sequence belongs to the HpcH/HpaI aldolase family. KDGluc aldolase subfamily. Homohexamer; trimer of dimers. Mg(2+) is required as a cofactor.

It catalyses the reaction 5-dehydro-4-deoxy-D-glucarate = 2-hydroxy-3-oxopropanoate + pyruvate. It carries out the reaction 2-dehydro-3-deoxy-D-glucarate = 2-hydroxy-3-oxopropanoate + pyruvate. The protein operates within carbohydrate acid metabolism; galactarate degradation; D-glycerate from galactarate: step 2/3. In terms of biological role, catalyzes the reversible retro-aldol cleavage of both 5-keto-4-deoxy-D-glucarate and 2-keto-3-deoxy-D-glucarate to pyruvate and tartronic semialdehyde. In Escherichia coli (strain ATCC 8739 / DSM 1576 / NBRC 3972 / NCIMB 8545 / WDCM 00012 / Crooks), this protein is 5-keto-4-deoxy-D-glucarate aldolase.